A 448-amino-acid chain; its full sequence is Phosphoglucosamine mutase (448 aa).

Ser101 (phosphoserine intermediate) is an active-site residue. Residues Ser101, Asp242, Asp244, and Asp246 each coordinate Mg(2+). At Ser101 the chain carries Phosphoserine.

This sequence belongs to the phosphohexose mutase family. The cofactor is Mg(2+). In terms of processing, activated by phosphorylation.

The catalysed reaction is alpha-D-glucosamine 1-phosphate = D-glucosamine 6-phosphate. Catalyzes the conversion of glucosamine-6-phosphate to glucosamine-1-phosphate. The chain is Phosphoglucosamine mutase from Nitrobacter winogradskyi (strain ATCC 25391 / DSM 10237 / CIP 104748 / NCIMB 11846 / Nb-255).